Here is an 887-residue protein sequence, read N- to C-terminus: DNA mismatch repair protein MutS (887 aa).

Position 602 to 609 (602 to 609) interacts with ATP; it reads GPNMSGKS.

The protein belongs to the DNA mismatch repair MutS family.

This protein is involved in the repair of mismatches in DNA. It is possible that it carries out the mismatch recognition step. This protein has a weak ATPase activity. This is DNA mismatch repair protein MutS from Staphylococcus saprophyticus subsp. saprophyticus (strain ATCC 15305 / DSM 20229 / NCIMB 8711 / NCTC 7292 / S-41).